We begin with the raw amino-acid sequence, 279 residues long: NAD kinase (279 aa).

Asp-57 functions as the Proton acceptor in the catalytic mechanism. NAD(+) contacts are provided by residues 57–58 (DG), 133–134 (NE), Arg-159, Asp-161, 172–177 (TAYNKS), and Ala-196.

The protein belongs to the NAD kinase family. A divalent metal cation is required as a cofactor.

The protein resides in the cytoplasm. It carries out the reaction NAD(+) + ATP = ADP + NADP(+) + H(+). Functionally, involved in the regulation of the intracellular balance of NAD and NADP, and is a key enzyme in the biosynthesis of NADP. Catalyzes specifically the phosphorylation on 2'-hydroxyl of the adenosine moiety of NAD to yield NADP. This is NAD kinase from Streptococcus thermophilus (strain CNRZ 1066).